The primary structure comprises 147 residues: Sec-independent protein translocase protein TatB (147 aa).

The chain crosses the membrane as a helical span at residues 1 to 21 (MFDIGFWELVVIGVVALVVLG). Positions 114 to 147 (EPVAPISVATPDEEPTVIPAARAQPSAEQGEVKP) are disordered.

It belongs to the TatB family. As to quaternary structure, the Tat system comprises two distinct complexes: a TatABC complex, containing multiple copies of TatA, TatB and TatC subunits, and a separate TatA complex, containing only TatA subunits. Substrates initially bind to the TatABC complex, which probably triggers association of the separate TatA complex to form the active translocon.

It is found in the cell inner membrane. Its function is as follows. Part of the twin-arginine translocation (Tat) system that transports large folded proteins containing a characteristic twin-arginine motif in their signal peptide across membranes. Together with TatC, TatB is part of a receptor directly interacting with Tat signal peptides. TatB may form an oligomeric binding site that transiently accommodates folded Tat precursor proteins before their translocation. The protein is Sec-independent protein translocase protein TatB of Aeromonas hydrophila subsp. hydrophila (strain ATCC 7966 / DSM 30187 / BCRC 13018 / CCUG 14551 / JCM 1027 / KCTC 2358 / NCIMB 9240 / NCTC 8049).